Consider the following 34-residue polypeptide: Mytilin-A (34 aa).

Intrachain disulfides connect Cys-2–Cys-27, Cys-6–Cys-29, Cys-10–Cys-31, and Cys-15–Cys-34.

The protein resides in the secreted. Its function is as follows. Has antibacterial activity against A.viridans, B.megaterium, M.luteus, E.faecalis, S.aureus and E.coli. It is active against the marine species A.carrageenovora, P.alginovora and C.drobachiensis. The polypeptide is Mytilin-A (Mytilus edulis (Blue mussel)).